The chain runs to 400 residues: Serine/threonine transporter SstT (400 aa).

Helical transmembrane passes span 14-34, 48-68, 76-96, 136-156, 177-197, 211-231, 285-305, 311-331, and 349-371; these read IIIAIILGIGVALLFPTVTPY, SVAPILVFVLVLSSIANFQVG, VLLLYVVGMLLAAFSAVIASL, AISEANFIGILAWAIGLGLAM, IIHKVIAFAPVGIFGLVAVTF, LLVVLLGTMLFVALVINPILV, IPLGATVNMAGAAVTITVLTL, LGIHVDLATMIILSVVATISA, and CSLFGISSEIAMQVVAVGMIISV.

It belongs to the dicarboxylate/amino acid:cation symporter (DAACS) (TC 2.A.23) family.

The protein resides in the cell inner membrane. The catalysed reaction is L-serine(in) + Na(+)(in) = L-serine(out) + Na(+)(out). The enzyme catalyses L-threonine(in) + Na(+)(in) = L-threonine(out) + Na(+)(out). Its function is as follows. Involved in the import of serine and threonine into the cell, with the concomitant import of sodium (symport system). The protein is Serine/threonine transporter SstT of Acinetobacter baumannii (strain AB307-0294).